We begin with the raw amino-acid sequence, 127 residues long: DNA-directed RNA polymerase subunit omega (127 aa).

This sequence belongs to the RNA polymerase subunit omega family. As to quaternary structure, the RNAP catalytic core consists of 2 alpha, 1 beta, 1 beta' and 1 omega subunit. When a sigma factor is associated with the core the holoenzyme is formed, which can initiate transcription.

The enzyme catalyses RNA(n) + a ribonucleoside 5'-triphosphate = RNA(n+1) + diphosphate. Its function is as follows. Promotes RNA polymerase assembly. Latches the N- and C-terminal regions of the beta' subunit thereby facilitating its interaction with the beta and alpha subunits. The chain is DNA-directed RNA polymerase subunit omega from Rickettsia rickettsii (strain Iowa).